We begin with the raw amino-acid sequence, 72 residues long: Translation initiation factor IF-1 (72 aa).

An S1-like domain is found at methionine 1–lysine 72.

It belongs to the IF-1 family. Component of the 30S ribosomal translation pre-initiation complex which assembles on the 30S ribosome in the order IF-2 and IF-3, IF-1 and N-formylmethionyl-tRNA(fMet); mRNA recruitment can occur at any time during PIC assembly.

The protein localises to the cytoplasm. In terms of biological role, one of the essential components for the initiation of protein synthesis. Stabilizes the binding of IF-2 and IF-3 on the 30S subunit to which N-formylmethionyl-tRNA(fMet) subsequently binds. Helps modulate mRNA selection, yielding the 30S pre-initiation complex (PIC). Upon addition of the 50S ribosomal subunit IF-1, IF-2 and IF-3 are released leaving the mature 70S translation initiation complex. This is Translation initiation factor IF-1 from Clostridium novyi (strain NT).